We begin with the raw amino-acid sequence, 170 residues long: MDIEKVNSMDFGEFVDVFGNVIERCPLIAAAVWSKRPFSGLGDLEKHFFAFIDGLPLSGQEGVLRCHPELAGRQLPWGRLTAESQREQSAAGLQNLGAAERLRFTELTAQYRTRFGFPFVLALRLSDPAAAPRELARRLRCPPAQELRTALGEVKKICHLRLANLLGEQP.

The active-site Proton donor is the His67. Substrate is bound by residues Pro68, Ser84 to Gln88, and Phe119 to Leu123.

The protein belongs to the OHCU decarboxylase family.

The protein resides in the peroxisome. It carries out the reaction 5-hydroxy-2-oxo-4-ureido-2,5-dihydro-1H-imidazole-5-carboxylate + H(+) = (S)-allantoin + CO2. The protein operates within purine metabolism; urate degradation; (S)-allantoin from urate: step 3/3. Catalyzes the stereoselective decarboxylation of 2-oxo-4-hydroxy-4-carboxy-5-ureidoimidazoline (OHCU) to (S)-allantoin. In Bos taurus (Bovine), this protein is 2-oxo-4-hydroxy-4-carboxy-5-ureidoimidazoline decarboxylase (URAD).